We begin with the raw amino-acid sequence, 485 residues long: N-succinylglutamate 5-semialdehyde dehydrogenase (485 aa).

220-225 (GSANTG) lines the NAD(+) pocket. Residues E243 and C278 contribute to the active site.

The protein belongs to the aldehyde dehydrogenase family. AstD subfamily.

It carries out the reaction N-succinyl-L-glutamate 5-semialdehyde + NAD(+) + H2O = N-succinyl-L-glutamate + NADH + 2 H(+). The protein operates within amino-acid degradation; L-arginine degradation via AST pathway; L-glutamate and succinate from L-arginine: step 4/5. Its function is as follows. Catalyzes the NAD-dependent reduction of succinylglutamate semialdehyde into succinylglutamate. This chain is N-succinylglutamate 5-semialdehyde dehydrogenase, found in Vibrio cholerae serotype O1 (strain M66-2).